Consider the following 559-residue polypeptide: MQAIYDIPEILFQHGVTDVVLSPGSRCAPLSIAFSRHKKLQIKVVPDERSAAFIALGMSLQTQKPTVLICTSGSALYNYAPAIVEAYYQRVPLIVLSADRPPEWIDQNDGQTIRQQEIYGKHSKAFFQLSAEHELPDTQWETYRKVNEAVSISEAYPKGPVHINIPFREPFYPKGEIMFSGSPTVIKREQPLHTLSDEQWKSIQHKLDSYKKILFVGGQHLYDESLRLKIGNIKAPFIGEVVSNLHGVRNVIHTHDTLLTSIPLTDLEELKPDLVISFGGALLSKWLKQFIRSNESIDHWYVGPDVTTPDVFQHLCQIIPVQLNEFLSKTTIASNTQEQFVQRWIQQQTHIIPAIREFNTKEKVFNEFTAVFDVLNHLPAFAKLHLANSMSVRYANTLGISQRNAEVFANRGTSGIDGVISTAYGYALKTSQLVTIITGDLAFFYDRNAFWNNYKPSNLRVVLLNNHGGGIFRMIDGPSALPELDELFETKQTLSARYLATEHGLEYTLCKNLNGLNQALESFFQPSMFGKILEIETDSVKNTEVFKRFKKTIQQSYLS.

This sequence belongs to the TPP enzyme family. MenD subfamily. As to quaternary structure, homodimer. Mg(2+) is required as a cofactor. Mn(2+) serves as cofactor. The cofactor is thiamine diphosphate.

The catalysed reaction is isochorismate + 2-oxoglutarate + H(+) = 5-enolpyruvoyl-6-hydroxy-2-succinyl-cyclohex-3-ene-1-carboxylate + CO2. Its pathway is quinol/quinone metabolism; 1,4-dihydroxy-2-naphthoate biosynthesis; 1,4-dihydroxy-2-naphthoate from chorismate: step 2/7. It functions in the pathway quinol/quinone metabolism; menaquinone biosynthesis. In terms of biological role, catalyzes the thiamine diphosphate-dependent decarboxylation of 2-oxoglutarate and the subsequent addition of the resulting succinic semialdehyde-thiamine pyrophosphate anion to isochorismate to yield 2-succinyl-5-enolpyruvyl-6-hydroxy-3-cyclohexene-1-carboxylate (SEPHCHC). This chain is 2-succinyl-5-enolpyruvyl-6-hydroxy-3-cyclohexene-1-carboxylate synthase, found in Cytophaga hutchinsonii (strain ATCC 33406 / DSM 1761 / CIP 103989 / NBRC 15051 / NCIMB 9469 / D465).